Consider the following 444-residue polypeptide: Cortexillin-1 (444 aa).

The interval 1 to 227 (MAGKDWEIVQ…VLYTSLFFHA (227 aa)) is actin-binding. Calponin-homology (CH) domains follow at residues 8-115 (IVQE…RKYR) and 124-229 (KSSE…HAYR). Coiled coils occupy residues 227–352 (AYRA…TRIR) and 410–434 (LATK…DLKA).

The protein belongs to the cortexillin family. As to quaternary structure, homodimer; parallel.

It is found in the cytoplasm. The protein resides in the cytoskeleton. In terms of biological role, actin-bundling protein. When linked to F-actin the actin filaments form preferentially anti-parallel bundles that associate into meshworks. Plays a major role in cytokinesis. Negatively regulates cortical localization of rapgap1. This chain is Cortexillin-1 (ctxA), found in Dictyostelium discoideum (Social amoeba).